Consider the following 106-residue polypeptide: Large ribosomal subunit protein eL42 (106 aa).

The tract at residues 37–56 (SQGKRRYDRKQSGYGGQTKP) is disordered.

Belongs to the eukaryotic ribosomal protein eL42 family.

The protein is Large ribosomal subunit protein eL42 (RPL44) of Pichia kudriavzevii (Yeast).